A 233-amino-acid polypeptide reads, in one-letter code: Sugar fermentation stimulation protein homolog (233 aa).

This sequence belongs to the SfsA family.

The polypeptide is Sugar fermentation stimulation protein homolog (Saccharophagus degradans (strain 2-40 / ATCC 43961 / DSM 17024)).